The sequence spans 97 residues: Large ribosomal subunit protein bL31 (97 aa).

The disordered stretch occupies residues 75–97 (NKTKKSNQAKVEKQTRHRSINEL). A compositionally biased stretch (basic and acidic residues) spans 84-97 (KVEKQTRHRSINEL).

This sequence belongs to the bacterial ribosomal protein bL31 family. Type A subfamily. In terms of assembly, part of the 50S ribosomal subunit.

In terms of biological role, binds the 23S rRNA. The polypeptide is Large ribosomal subunit protein bL31 (Mycoplasma genitalium (strain ATCC 33530 / DSM 19775 / NCTC 10195 / G37) (Mycoplasmoides genitalium)).